The chain runs to 152 residues: MDIPRSLRHPEILLVLLLSEITDICQAYCEADCKSYCCDGTPPYCCSYYAYIGNVLSGTAIAGIVFGIVFIMGVIAGIAICICMCMKSSRGTRVGVIRTTHINAISSYPAAPPPYSYEYEMDFPLDLPPPYTPTPPMSHYPSPPPYPGPSRK.

The first 27 residues, 1 to 27, serve as a signal peptide directing secretion; that stretch reads MDIPRSLRHPEILLVLLLSEITDICQA. Residues 28 to 59 lie on the Extracellular side of the membrane; that stretch reads YCEADCKSYCCDGTPPYCCSYYAYIGNVLSGT. Residues 60-80 traverse the membrane as a helical segment; that stretch reads AIAGIVFGIVFIMGVIAGIAI. Residues 81–152 are Cytoplasmic-facing; the sequence is CICMCMKSSR…PPPYPGPSRK (72 aa). The interval 130–152 is disordered; the sequence is PYTPTPPMSHYPSPPPYPGPSRK.

Belongs to the CYYR1 family.

Its subcellular location is the membrane. In Xenopus laevis (African clawed frog), this protein is Cysteine and tyrosine-rich protein 1 (cyyr1).